The sequence spans 123 residues: MELDGFIYILVGSTFGLIVRMFIKYISGKKKIFYSNNILIVNVLASLFLGIFEGLNITNKNLILFIFVGFLGCFSTFSSFIYQLFNLIREKKYLILLIYYAEVILLSFLFFCLGYFITLTFIN.

A run of 4 helical transmembrane segments spans residues 3–23 (LDGFIYILVGSTFGLIVRMFI), 38–58 (ILIVNVLASLFLGIFEGLNIT), 62–82 (LILFIFVGFLGCFSTFSSFIY), and 94–114 (LILLIYYAEVILLSFLFFCLG). Na(+) is bound by residues Gly-72 and Ser-75.

Belongs to the fluoride channel Fluc/FEX (TC 1.A.43) family.

It localises to the cell inner membrane. The catalysed reaction is fluoride(in) = fluoride(out). Na(+) is not transported, but it plays an essential structural role and its presence is essential for fluoride channel function. In terms of biological role, fluoride-specific ion channel. Important for reducing fluoride concentration in the cell, thus reducing its toxicity. The chain is Fluoride-specific ion channel FluC 2 from Prochlorococcus marinus subsp. pastoris (strain CCMP1986 / NIES-2087 / MED4).